The sequence spans 394 residues: Quinolinate synthase (394 aa).

Iminosuccinate contacts are provided by histidine 57 and serine 74. Cysteine 121 is a binding site for [4Fe-4S] cluster. Iminosuccinate contacts are provided by residues 153–155 (YMN) and serine 174. Cysteine 250 serves as a coordination point for [4Fe-4S] cluster. Iminosuccinate is bound by residues 276–278 (HPE) and threonine 293. Residue cysteine 340 participates in [4Fe-4S] cluster binding.

This sequence belongs to the quinolinate synthase family. Type 3 subfamily. The cofactor is [4Fe-4S] cluster.

Its subcellular location is the cytoplasm. It carries out the reaction iminosuccinate + dihydroxyacetone phosphate = quinolinate + phosphate + 2 H2O + H(+). The protein operates within cofactor biosynthesis; NAD(+) biosynthesis; quinolinate from iminoaspartate: step 1/1. Functionally, catalyzes the condensation of iminoaspartate with dihydroxyacetone phosphate to form quinolinate. The polypeptide is Quinolinate synthase (Nocardioides sp. (strain ATCC BAA-499 / JS614)).